A 127-amino-acid polypeptide reads, in one-letter code: Translation initiation factor 5A (127 aa).

Hypusine is present on K35.

The protein belongs to the eIF-5A family.

It localises to the cytoplasm. In terms of biological role, functions by promoting the formation of the first peptide bond. This is Translation initiation factor 5A (eIF5A) from Methanothrix thermoacetophila (strain DSM 6194 / JCM 14653 / NBRC 101360 / PT) (Methanosaeta thermophila).